We begin with the raw amino-acid sequence, 136 residues long: Large ribosomal subunit protein uL16 (136 aa).

The protein belongs to the universal ribosomal protein uL16 family. In terms of assembly, part of the 50S ribosomal subunit.

Functionally, binds 23S rRNA and is also seen to make contacts with the A and possibly P site tRNAs. The protein is Large ribosomal subunit protein uL16 of Pasteurella multocida (strain Pm70).